The primary structure comprises 109 residues: Period circadian protein (109 aa).

Positions Cys-59–Ser-109 are disordered. A compositionally biased stretch (low complexity) spans Ser-69–Val-98.

Forms a heterodimer with timeless (TIM); the complex then translocates into the nucleus. Phosphorylated with a circadian rhythmicity, probably by the double-time protein (dbt). Phosphorylation could be implicated in the stability of per monomer and in the formation of heterodimer per-tim.

It localises to the nucleus. The protein resides in the cytoplasm. It is found in the perinuclear region. Its function is as follows. Essential for biological clock functions. Determines the period length of circadian and ultradian rhythms; an increase in PER dosage leads to shortened circadian rhythms and a decrease leads to lengthened circadian rhythms. Essential for the circadian rhythmicity of locomotor activity, eclosion behavior, and for the rhythmic component of the male courtship song that originates in the thoracic nervous system. The biological cycle depends on the rhythmic formation and nuclear localization of the TIM-PER complex. Light induces the degradation of TIM, which promotes elimination of PER. Nuclear activity of the heterodimer coordinatively regulates PER and TIM transcription through a negative feedback loop. Behaves as a negative element in circadian transcriptional loop. Does not appear to bind DNA, suggesting indirect transcriptional inhibition. In Syritta pipiens (Hoverfly), this protein is Period circadian protein (per).